A 1050-amino-acid polypeptide reads, in one-letter code: ATP-dependent DNA helicase MPH1 (1050 aa).

The Helicase ATP-binding domain occupies 95 to 262 (IVQRAFYHNL…EIIDNLNISK (168 aa)). Residue 108-115 (LPTGLGKT) coordinates ATP. The DEAH box signature appears at 210–213 (DEAH). Residues 431 to 631 (KIEAMMEELD…LIDLKEQNRM (201 aa)) form the Helicase C-terminal domain. Disordered regions lie at residues 493-524 (DESN…AQIN) and 743-821 (DSDE…PPKR). The span at 499-508 (KKSKGKRVGK) shows a compositional bias: basic residues. A compositionally biased stretch (basic and acidic residues) spans 786 to 799 (RTLDQHHSASEERG). The span at 800 to 810 (INSNFSHESNL) shows a compositional bias: polar residues.

The protein belongs to the DEAD box helicase family. DEAH subfamily. FANCM sub-subfamily. Interacts with the MHF histone-fold complex to form the FANCM-MHF complex.

It is found in the nucleus. It carries out the reaction ATP + H2O = ADP + phosphate + H(+). In terms of biological role, ATP-dependent DNA helicase involved in DNA damage repair by homologous recombination and in genome maintenance. Capable of unwinding D-loops. Plays a role in limiting crossover recombinants during mitotic DNA double-strand break (DSB) repair. Component of a FANCM-MHF complex which promotes gene conversion at blocked replication forks, probably by reversal of the stalled fork. This is ATP-dependent DNA helicase MPH1 from Scheffersomyces stipitis (strain ATCC 58785 / CBS 6054 / NBRC 10063 / NRRL Y-11545) (Yeast).